Here is a 444-residue protein sequence, read N- to C-terminus: Putative dipeptidase CPC735_015490 (444 aa).

The N-terminal stretch at 1 to 34 (MSQRTEHNGSWLRNAGSLLSVLACVAVLASPASA) is a signal peptide. Zn(2+) is bound by residues H67, D69, and E178. C118 and C207 are joined by a disulfide. H205 is a binding site for substrate. H250 and H271 together coordinate Zn(2+). Substrate is bound by residues R282 and D342. N-linked (GlcNAc...) asparagine glycosylation is present at N413.

This sequence belongs to the metallo-dependent hydrolases superfamily. Peptidase M19 family. Zn(2+) serves as cofactor.

It catalyses the reaction an L-aminoacyl-L-amino acid + H2O = 2 an L-alpha-amino acid. Its function is as follows. Hydrolyzes a wide range of dipeptides. This is Putative dipeptidase CPC735_015490 from Coccidioides posadasii (strain C735) (Valley fever fungus).